We begin with the raw amino-acid sequence, 91 residues long: MALLQQEKQEIIETYRLHDTDTGSAEVQVALLTSRINQLSQHLQKNPKDFNSRRGLMMMIGRRKRLLNYIAKRSPDRFRELAERLNIRVKK.

Belongs to the universal ribosomal protein uS15 family. As to quaternary structure, part of the 30S ribosomal subunit. Forms a bridge to the 50S subunit in the 70S ribosome, contacting the 23S rRNA.

Its function is as follows. One of the primary rRNA binding proteins, it binds directly to 16S rRNA where it helps nucleate assembly of the platform of the 30S subunit by binding and bridging several RNA helices of the 16S rRNA. Functionally, forms an intersubunit bridge (bridge B4) with the 23S rRNA of the 50S subunit in the ribosome. The chain is Small ribosomal subunit protein uS15 from Synechococcus sp. (strain JA-3-3Ab) (Cyanobacteria bacterium Yellowstone A-Prime).